Reading from the N-terminus, the 220-residue chain is Octanoyltransferase (220 aa).

Residues 27–208 (PGTADEIWLC…QLARAHGQAV (182 aa)) form the BPL/LPL catalytic domain. Residues 66 to 73 (RGGQVTYH), 139 to 141 (ALG), and 152 to 154 (GLA) each bind substrate. Residue C170 is the Acyl-thioester intermediate of the active site.

It belongs to the LipB family.

The protein localises to the cytoplasm. The enzyme catalyses octanoyl-[ACP] + L-lysyl-[protein] = N(6)-octanoyl-L-lysyl-[protein] + holo-[ACP] + H(+). It participates in protein modification; protein lipoylation via endogenous pathway; protein N(6)-(lipoyl)lysine from octanoyl-[acyl-carrier-protein]: step 1/2. Functionally, catalyzes the transfer of endogenously produced octanoic acid from octanoyl-acyl-carrier-protein onto the lipoyl domains of lipoate-dependent enzymes. Lipoyl-ACP can also act as a substrate although octanoyl-ACP is likely to be the physiological substrate. The chain is Octanoyltransferase from Bordetella pertussis (strain Tohama I / ATCC BAA-589 / NCTC 13251).